The following is a 1469-amino-acid chain: Accumulation-associated protein (1469 aa).

The signal sequence occupies residues 1–52 (MGKRRQGPINKKVDFLPNKLNKYSIRKFTVGTASILLGSTLIFGSSSHEAKA). Disordered stretches follow at residues 52–164 (AAEE…SEPV), 486–511 (GIET…TPTT), and 528–1443 (EIKP…QANE). Polar residues-rich tracts occupy residues 75 to 94 (ENTN…STLQ) and 110 to 125 (KANS…SEAP). Positions 129–144 (DLARKEDIPAVSKNEE) are enriched in basic and acidic residues. Residues 145–164 (LQSSQPNTDSKIEPTTSEPV) show a composition bias toward polar residues. G5 domains are found at residues 446–528 (PKAV…GGEE), 574–656 (YGPV…GGEE), 702–784 (YGPV…GGEE), 830–912 (YGPV…GGEE), 958–1040 (YGPV…GGEE), 1086–1168 (YGPV…GGEQ), and 1211–1296 (VTKY…GPTK). Positions 489-500 (TTTTPTYVNPNT) are enriched in low complexity. 2 stretches are compositionally biased toward basic and acidic residues: residues 528-537 (EIKPGHKDEF) and 589-613 (PFDK…KGEP). Over residues 614–629 (GTKTITTPTTKNPLTG) the composition is skewed to low complexity. Composition is skewed to basic and acidic residues over residues 631 to 646 (KVGE…KQPV) and 655 to 665 (EEIKPGHKDEF). A compositionally biased stretch (low complexity) spans 738–757 (KGEPGTKTITTPTTKNPLTG). Composition is skewed to basic and acidic residues over residues 759-793 (KVGE…KDEF) and 845-869 (PFDK…KGEP). The segment covering 870–885 (GTKTITTPTTKNPLTG) has biased composition (low complexity). Basic and acidic residues predominate over residues 887–921 (KVGEGEPTEKVTKQPVDEIVHYGGEEIKPGHKDEF). Over residues 994–1013 (KGEPGTKTITTPTTKNPLTG) the composition is skewed to low complexity. Residues 1015-1049 (KVGEGEPTEKITKQPVDEIVHYGGEEIKPGHKDEF) are compositionally biased toward basic and acidic residues. A compositionally biased stretch (low complexity) spans 1122-1141 (KGEPGTKTITTPTTKNPLTG). Basic and acidic residues-rich tracts occupy residues 1143–1162 (KVGE…DEIV), 1229–1253 (PFDK…KGEP), and 1271–1286 (KVGE…KQPV). Residues 1409–1443 (TPTQSGAPEQPNRSMHSTDNKNQLPDTGENRQANE) are compositionally biased toward polar residues. An LPXTG sorting signal motif is present at residues 1432–1436 (LPDTG). A Pentaglycyl murein peptidoglycan amidated threonine modification is found at threonine 1435. Residues 1436–1469 (GENRQANEGTLVGSLLAIVGSLFIFGRRKKGNEK) constitute a propeptide, removed by sortase.

Its subcellular location is the secreted. It localises to the cell wall. The chain is Accumulation-associated protein from Staphylococcus epidermidis (strain ATCC 12228 / FDA PCI 1200).